The chain runs to 400 residues: Formate-dependent phosphoribosylglycinamide formyltransferase (400 aa).

N(1)-(5-phospho-beta-D-ribosyl)glycinamide contacts are provided by residues Glu-22–Leu-23 and Glu-82. ATP contacts are provided by residues Arg-115, Lys-156, Ser-161–Gln-166, Glu-196–Ile-199, and Glu-204. The ATP-grasp domain occupies Arg-120–Leu-309. The Mg(2+) site is built by Glu-268 and Glu-280. N(1)-(5-phospho-beta-D-ribosyl)glycinamide-binding positions include Asp-287, Lys-361, and Arg-368–Arg-369.

The protein belongs to the PurK/PurT family. As to quaternary structure, homodimer.

It catalyses the reaction N(1)-(5-phospho-beta-D-ribosyl)glycinamide + formate + ATP = N(2)-formyl-N(1)-(5-phospho-beta-D-ribosyl)glycinamide + ADP + phosphate + H(+). It functions in the pathway purine metabolism; IMP biosynthesis via de novo pathway; N(2)-formyl-N(1)-(5-phospho-D-ribosyl)glycinamide from N(1)-(5-phospho-D-ribosyl)glycinamide (formate route): step 1/1. Involved in the de novo purine biosynthesis. Catalyzes the transfer of formate to 5-phospho-ribosyl-glycinamide (GAR), producing 5-phospho-ribosyl-N-formylglycinamide (FGAR). Formate is provided by PurU via hydrolysis of 10-formyl-tetrahydrofolate. This is Formate-dependent phosphoribosylglycinamide formyltransferase from Xanthomonas oryzae pv. oryzae (strain KACC10331 / KXO85).